Reading from the N-terminus, the 309-residue chain is Taste receptor type 2 member 8 (309 aa).

The Extracellular portion of the chain corresponds to 1 to 7; it reads MFSPADN. Residues 8-28 form a helical membrane-spanning segment; sequence IFIILITGEFILGILGNGYIA. The Cytoplasmic segment spans residues 29-50; sequence LVNWIDWIKKKKISTTDYILTN. A helical transmembrane segment spans residues 51–71; that stretch reads LVISRICLISVIVVNGIVTVL. At 72–82 the chain is on the extracellular side; the sequence is YPDVYTKSKLQ. Residues 83–103 form a helical membrane-spanning segment; it reads IAISTFWTFANYLNMWFTTCL. Over 104-131 the chain is Cytoplasmic; the sequence is NVFYFLKIANSSHPLFLWLKQKIDMVVR. Residues 132–152 traverse the membrane as a helical segment; sequence WILLGCFAISLLVSLIIAIVL. Topologically, residues 153 to 184 are extracellular; that stretch reads SRDYRFHAIAKHKRNITEMFHVSKMLYFEPLT. A glycan (N-linked (GlcNAc...) asparagine) is linked at asparagine 167. Residues 185–205 form a helical membrane-spanning segment; it reads LFNLLAIVPFIVSLMSFFLLV. The Cytoplasmic portion of the chain corresponds to 206-239; the sequence is RSLQRHTKQIKLYATGGRDPSTEAHVRAIKTMTS. Residues 240 to 260 traverse the membrane as a helical segment; sequence FIFFFFLYYITSLLVTFSYLM. Topologically, residues 261–266 are extracellular; sequence TKYKLA. The chain crosses the membrane as a helical span at residues 267-287; the sequence is MAFGEIVAILYPSGHSFILII. Residues 288–309 are Cytoplasmic-facing; that stretch reads LNNKLRQASVRMLTCIKITCVI.

Belongs to the G-protein coupled receptor T2R family.

The protein resides in the membrane. Its function is as follows. Receptor that may play a role in the perception of bitterness and is gustducin-linked. May play a role in sensing the chemical composition of the gastrointestinal content. The activity of this receptor may stimulate alpha gustducin, mediate PLC-beta-2 activation and lead to the gating of TRPM5. This is Taste receptor type 2 member 8 (TAS2R8) from Pongo pygmaeus (Bornean orangutan).